We begin with the raw amino-acid sequence, 340 residues long: MLQPPKIVAELSANHNQDLNLAKESLHAIKESGADFVKLQTYTPSCMTLNSKEDPFIIQGTLWDKENLYELYQKASTPLEWHAELFELARKLDLGIFSSPFSSQALELLESLNCPMYKIASFEIVDLDLIEKAARTQKPIILSSGIATHTELQDAISLCRRVNNFDITLLKCVSAYPSKIEDANLLSMVKLGEIFGVKFGLSDHTIGSLCPILATTLGASMIEKHFILNKSLQTPDSAFSMDFNGFKSMVEAIKQSVLALGEEEPRINPKTLEKRRFFARSLFVIKDIQKGEALTENNIKALRPNLGLHPKFYKEILGQKASKFLKANTPLSADDIERSL.

An AFP-like domain is found at 281–337 (SLFVIKDIQKGEALTENNIKALRPNLGLHPKFYKEILGQKASKFLKANTPLSADDIE).

The protein belongs to the pseudaminic acid synthase family. It depends on a divalent metal cation as a cofactor.

It catalyses the reaction 2,4-diacetamido-2,4,6-trideoxy-beta-L-altrose + phosphoenolpyruvate + H2O = pseudaminate + phosphate. Its function is as follows. Catalyzes the fifth step in the biosynthesis of pseudaminic acid, a sialic-acid-like sugar that is used to modify flagellin. Catalyzes the condensation of phosphoenolpyruvate with 2,4-diacetamido-2,4,6-trideoxy-beta-l-altropyranose, forming pseudaminic acid. The polypeptide is Pseudaminic acid synthase (pseI) (Helicobacter pylori (strain ATCC 700392 / 26695) (Campylobacter pylori)).